Consider the following 277-residue polypeptide: Shikimate dehydrogenase (NADP(+)) (277 aa).

Residues Ser-15–Ser-17 and Thr-62 each bind shikimate. Lys-66 acts as the Proton acceptor in catalysis. The shikimate site is built by Asn-87 and Asp-102. Residues Gly-127 to Ala-131, Asn-151 to Lys-156, and Ile-219 contribute to the NADP(+) site. Residue Tyr-221 participates in shikimate binding. Gly-242 serves as a coordination point for NADP(+).

The protein belongs to the shikimate dehydrogenase family. In terms of assembly, homodimer.

The catalysed reaction is shikimate + NADP(+) = 3-dehydroshikimate + NADPH + H(+). It functions in the pathway metabolic intermediate biosynthesis; chorismate biosynthesis; chorismate from D-erythrose 4-phosphate and phosphoenolpyruvate: step 4/7. Involved in the biosynthesis of the chorismate, which leads to the biosynthesis of aromatic amino acids. Catalyzes the reversible NADPH linked reduction of 3-dehydroshikimate (DHSA) to yield shikimate (SA). This chain is Shikimate dehydrogenase (NADP(+)), found in Bacillus cereus (strain AH187).